The chain runs to 74 residues: MSTHSNHPFHLVDYSPWPLTGAIGAMTTVSGMVKWFHQYDMSLFLLGNIITILTVYQWWRDVSREGTYQGLHTY.

2 helical membrane-spanning segments follow: residues 15–37 (SPWP…KWFH) and 42–59 (SLFL…YQWW).

The protein belongs to the cytochrome c oxidase subunit 3 family. Component of the cytochrome c oxidase (complex IV, CIV), a multisubunit enzyme composed of a catalytic core of 3 subunits and several supernumerary subunits. The complex exists as a monomer or a dimer and forms supercomplexes (SCs) in the inner mitochondrial membrane with ubiquinol-cytochrome c oxidoreductase (cytochrome b-c1 complex, complex III, CIII).

It is found in the mitochondrion inner membrane. It catalyses the reaction 4 Fe(II)-[cytochrome c] + O2 + 8 H(+)(in) = 4 Fe(III)-[cytochrome c] + 2 H2O + 4 H(+)(out). Its function is as follows. Component of the cytochrome c oxidase, the last enzyme in the mitochondrial electron transport chain which drives oxidative phosphorylation. The respiratory chain contains 3 multisubunit complexes succinate dehydrogenase (complex II, CII), ubiquinol-cytochrome c oxidoreductase (cytochrome b-c1 complex, complex III, CIII) and cytochrome c oxidase (complex IV, CIV), that cooperate to transfer electrons derived from NADH and succinate to molecular oxygen, creating an electrochemical gradient over the inner membrane that drives transmembrane transport and the ATP synthase. Cytochrome c oxidase is the component of the respiratory chain that catalyzes the reduction of oxygen to water. Electrons originating from reduced cytochrome c in the intermembrane space (IMS) are transferred via the dinuclear copper A center (CU(A)) of subunit 2 and heme A of subunit 1 to the active site in subunit 1, a binuclear center (BNC) formed by heme A3 and copper B (CU(B)). The BNC reduces molecular oxygen to 2 water molecules using 4 electrons from cytochrome c in the IMS and 4 protons from the mitochondrial matrix. This Drosophila simulans (Fruit fly) protein is Cytochrome c oxidase subunit 3 (mt:CoIII).